We begin with the raw amino-acid sequence, 239 residues long: MGKRILPQRMGRGTPTFRSPSHRRVGPAKYPPLKLDRTIKGKIIDLLHDPGRWVPLAKIVLEDGTTFLTPAVEGMYVGQIIEIGPDAHISNGNILPIGKIPEGTQIANIEKRPGDGGKFVRSSGTYALIVGRAGTKTQVQLPSGKIIEVPNNARATIGVIAGGGRDEKPLLKAGNAYHKWKVKAKKWPKVRGVAMNAVSHPHGGGSHQHVGKPSTVARETPPGRKVGHIAARRTGRRKG.

2 disordered regions span residues 1–28 (MGKR…VGPA) and 199–239 (SHPH…RRKG). The segment covering 225–239 (KVGHIAARRTGRRKG) has biased composition (basic residues).

The protein belongs to the universal ribosomal protein uL2 family. Part of the 50S ribosomal subunit. Forms a bridge to the 30S subunit in the 70S ribosome.

One of the primary rRNA binding proteins. Required for association of the 30S and 50S subunits to form the 70S ribosome, for tRNA binding and peptide bond formation. It has been suggested to have peptidyltransferase activity; this is somewhat controversial. Makes several contacts with the 16S rRNA in the 70S ribosome. This Staphylothermus marinus (strain ATCC 43588 / DSM 3639 / JCM 9404 / F1) protein is Large ribosomal subunit protein uL2.